Here is a 307-residue protein sequence, read N- to C-terminus: Putative lipid kinase SE_0507 (307 aa).

A DAGKc domain is found at 3–139; the sequence is QPYNHGVLFY…YDVLKVNDLY (137 aa). ATP is bound by residues Ser44, 74–80, and Thr101; that span reads GDGTLNE. 3 residues coordinate Mg(2+): Ser220, Asp223, and Arg225. The active-site Proton acceptor is Glu281.

The protein belongs to the diacylglycerol/lipid kinase family. Mg(2+) serves as cofactor.

In terms of biological role, may catalyze the ATP-dependent phosphorylation of lipids other than diacylglycerol (DAG). The sequence is that of Putative lipid kinase SE_0507 from Staphylococcus epidermidis (strain ATCC 12228 / FDA PCI 1200).